A 559-amino-acid chain; its full sequence is N-acetylglucosamine-6-sulfatase (559 aa).

The disordered stretch occupies residues 1 to 26 (MRFLSLAPDRPRRGGPRHLPSGSPAP). The signal sequence occupies residues 1 to 47 (MRFLSLAPDRPRRGGPRHLPSGSPAPPPPPPLLLLLLLGGCLGVSGA). Residues Asp62, Asp63, and Cys98 each contribute to the Ca(2+) site. Cys98 serves as the catalytic Nucleophile. Cys98 bears the 3-oxoalanine (Cys) mark. Asn118, Asn124, Asn190, Asn205, Asn217, Asn286, and Asn324 each carry an N-linked (GlcNAc...) asparagine glycan. The Ca(2+) site is built by Asp333 and Asn334. 6 N-linked (GlcNAc...) asparagine glycosylation sites follow: Asn369, Asn394, Asn412, Asn429, Asn456, and Asn487. Ser548 is subject to Phosphoserine.

The protein belongs to the sulfatase family. The cofactor is Ca(2+). Processed by internal peptidase. Post-translationally, the conversion to 3-oxoalanine (also known as C-formylglycine, FGly), of a serine or cysteine residue in prokaryotes and of a cysteine residue in eukaryotes, is critical for catalytic activity.

It localises to the lysosome. The enzyme catalyses Hydrolysis of the 6-sulfate groups of the N-acetyl-D-glucosamine 6-sulfate units of heparan sulfate and keratan sulfate.. In terms of biological role, hydrolyzes 6-sulfate groups in N-acetyl-d-glucosaminide units of heparin sulfate and keratan sulfate. The polypeptide is N-acetylglucosamine-6-sulfatase (GNS) (Capra hircus (Goat)).